The chain runs to 461 residues: Tumor necrosis factor receptor superfamily member 1A (461 aa).

A signal peptide spans 1–29 (MGLPIVPGLLLSLVLLALLMGIHPSGVTG). The Extracellular segment spans residues 30 to 211 (LVPSLGDREK…VTNPQDSGTA (182 aa)). TNFR-Cys repeat units follow at residues 43-82 (LCPQ…TVCE), 83-125 (VCDK…DTVC), 126-166 (GCKK…NTVC), and 167-196 (NCHA…KLCL). 12 cysteine pairs are disulfide-bonded: Cys44-Cys58, Cys59-Cys72, Cys62-Cys81, Cys84-Cys99, Cys102-Cys117, Cys105-Cys125, Cys127-Cys143, Cys146-Cys158, Cys149-Cys166, Cys168-Cys179, Cys182-Cys195, and Cys185-Cys191. The N-linked (GlcNAc...) asparagine glycan is linked to Asn54. Asn151 is a glycosylation site (N-linked (GlcNAc...) asparagine). An N-linked (GlcNAc...) asparagine glycan is attached at Asn201. Residues 212 to 234 (VLLPLVIFLGLCLLFFICISLLC) traverse the membrane as a helical segment. The Cytoplasmic portion of the chain corresponds to 235–461 (RYPQWRPRVY…AHSSTTHLPR (227 aa)). The tract at residues 344 to 354 (VRKWEDVVAAQ) is N-SMase activation domain (NSD). A Death domain is found at 363–448 (PAMLYAVVDG…GCLENIRETL (86 aa)).

Binding of TNF to the extracellular domain leads to homotrimerization. The aggregated death domains provide a novel molecular interface that interacts specifically with the death domain of TRADD. Various TRADD-interacting proteins such as TRAFS, RIPK1 and possibly FADD, are recruited to the complex by their association with TRADD. This complex activates at least two distinct signaling cascades, apoptosis and NF-kappa-B signaling. Interacts with BAG4, BABAM2, FEM1B, GRB2, SQSTM1 and TRPC4AP. Interacts with DAB2IP. Interacts directly with NOL3 (via CARD domain); inhibits TNF-signaling pathway. Interacts with SH3RF2, TRADD and RIPK1. SH3RF2 facilitates the recruitment of RIPK1 and TRADD to TNFRSF1A in a TNF-alpha-dependent process. Interacts with PGLYRP1; this interaction is important for cell death induction. Interacts (via death domain) with MADD (via death domain).

The protein localises to the cell membrane. Its subcellular location is the golgi apparatus membrane. In terms of biological role, receptor for TNFSF2/TNF-alpha and homotrimeric TNFSF1/lymphotoxin-alpha. The adapter molecule FADD recruits caspase-8 to the activated receptor. The resulting death-inducing signaling complex (DISC) performs caspase-8 proteolytic activation which initiates the subsequent cascade of caspases (aspartate-specific cysteine proteases) mediating apoptosis. This is Tumor necrosis factor receptor superfamily member 1A (Tnfrsf1a) from Rattus norvegicus (Rat).